Consider the following 147-residue polypeptide: E3 ubiquitin-protein ligase RHA2B (147 aa).

An RING-type; atypical zinc finger spans residues 74–116; the sequence is CIVCLSKLKTGEEVRKLDCRHVFHKQCLEGWLQHLNFNCPLCR.

As to quaternary structure, interacts with NAC19. Expressed in vascular tissue, root tips, embryos and pistils.

The protein localises to the cytoplasm. Its subcellular location is the nucleus. It catalyses the reaction S-ubiquitinyl-[E2 ubiquitin-conjugating enzyme]-L-cysteine + [acceptor protein]-L-lysine = [E2 ubiquitin-conjugating enzyme]-L-cysteine + N(6)-ubiquitinyl-[acceptor protein]-L-lysine.. It functions in the pathway protein modification; protein ubiquitination. Its function is as follows. E3 ubiquitin-protein ligase involved in the positive regulation of abscisic acid (ABA) signaling and responses to salt and osmotic stresses during seed germination and early seedling development. Acts additively with RHA2A in regulating ABA signaling and drought response. Possesses E3 ubiquitin ligase activity in vitro. This Arabidopsis thaliana (Mouse-ear cress) protein is E3 ubiquitin-protein ligase RHA2B.